Here is a 1043-residue protein sequence, read N- to C-terminus: Integrator complex subunit 3 (1043 aa).

M1 bears the N-acetylmethionine mark. 3 positions are modified to phosphoserine: S502, S537, and S995. The interval 977–1043 is disordered; that stretch reads YEDSSTKPPK…GSSAVGSDSD (67 aa). Over residues 1008–1022 the composition is skewed to acidic residues; sequence AEEESGSSSASEEED.

The protein belongs to the Integrator subunit 3 family. In terms of assembly, component of the Integrator complex, composed of core subunits INTS1, INTS2, INTS3, INTS4, INTS5, INTS6, INTS7, INTS8, INTS9/RC74, INTS10, INTS11/CPSF3L, INTS12, INTS13, INTS14 and INTS15. The core complex associates with protein phosphatase 2A subunits PPP2CA and PPP2R1A, to form the Integrator-PP2A (INTAC) complex. Component of the SOSS complex, composed of SOSS-B (SOSS-B1/NABP2 or SOSS-B2/NABP1), SOSS-A/INTS3 and SOSS-C/INIP. SOSS complexes containing SOSS-B1/NABP2 are more abundant than complexes containing SOSS-B2/NABP1. Interacts with SOSS-B1/NABP2, SOSS-B2/NABP1 and SOSS-C/INIP; the interaction is direct. Interacts with NBN/NBS1.

The protein localises to the nucleus. Its subcellular location is the cytoplasm. In terms of biological role, component of the integrator complex, a multiprotein complex that terminates RNA polymerase II (Pol II) transcription in the promoter-proximal region of genes. The integrator complex provides a quality checkpoint during transcription elongation by driving premature transcription termination of transcripts that are unfavorably configured for transcriptional elongation: the complex terminates transcription by (1) catalyzing dephosphorylation of the C-terminal domain (CTD) of Pol II subunit POLR2A/RPB1 and SUPT5H/SPT5, (2) degrading the exiting nascent RNA transcript via endonuclease activity and (3) promoting the release of Pol II from bound DNA. The integrator complex is also involved in terminating the synthesis of non-coding Pol II transcripts, such as enhancer RNAs (eRNAs), small nuclear RNAs (snRNAs), telomerase RNAs and long non-coding RNAs (lncRNAs). Within the integrator complex, INTS3 is involved in the post-termination step: INTS3 binds INTS7 in the open conformation of integrator complex and prevents the rebinding of Pol II to the integrator after termination cycle. Mediates recruitment of cytoplasmic dynein to the nuclear envelope, probably as component of the integrator complex. Functionally, component of the SOSS complex, a multiprotein complex that functions downstream of the MRN complex to promote DNA repair and G2/M checkpoint. The SOSS complex associates with single-stranded DNA at DNA lesions and influences diverse endpoints in the cellular DNA damage response including cell-cycle checkpoint activation, recombinational repair and maintenance of genomic stability. The SOSS complex is required for efficient homologous recombination-dependent repair of double-strand breaks (DSBs) and ATM-dependent signaling pathways. In the SOSS complex, it is required for the assembly of the complex and for stabilization of the complex at DNA damage sites. The sequence is that of Integrator complex subunit 3 (INTS3) from Pongo abelii (Sumatran orangutan).